Here is a 521-residue protein sequence, read N- to C-terminus: NAD(P)H-quinone oxidoreductase subunit 2 (521 aa).

The next 14 membrane-spanning stretches (helical) occupy residues 16–36 (ILPEGIVIITLMVVLIGDLIG), 43–63 (WLPYGAIAGLLAALFALYTAW), 80–100 (LSIVFRGIIALSTIVTLLMSI), 110–130 (LAEFIGIMLTATLGGMFLSGA), 133–153 (LVMIFISLEMLSISSYLMTGY), 168–188 (LLIGASSSAIFLYGSSLLYGL), 211–231 (LGLAIALVFVIAGIAFKISAV), 245–265 (PTPVVAFLSVGSKAAGFALAI), 279–299 (WHLIFTALAILSMVLGNVVAL), 307–327 (MLAYSSIGQAGFVMIGLTAGT), 335–355 (VFYLLVYLFMNLGAFSGVILF), 379–399 (LGLSLCLLSLGGIPPLAGFFG), 401–421 (IYLFWAGWQAELYGLVLLALV), and 467–487 (VGLVLSVIATSLAGILSNPLF).

The protein belongs to the complex I subunit 2 family. As to quaternary structure, NDH-1 can be composed of about 15 different subunits; different subcomplexes with different compositions have been identified which probably have different functions.

It localises to the cellular thylakoid membrane. The catalysed reaction is a plastoquinone + NADH + (n+1) H(+)(in) = a plastoquinol + NAD(+) + n H(+)(out). The enzyme catalyses a plastoquinone + NADPH + (n+1) H(+)(in) = a plastoquinol + NADP(+) + n H(+)(out). NDH-1 shuttles electrons from an unknown electron donor, via FMN and iron-sulfur (Fe-S) centers, to quinones in the respiratory and/or the photosynthetic chain. The immediate electron acceptor for the enzyme in this species is believed to be plastoquinone. Couples the redox reaction to proton translocation, and thus conserves the redox energy in a proton gradient. Cyanobacterial NDH-1 also plays a role in inorganic carbon-concentration. This is NAD(P)H-quinone oxidoreductase subunit 2 from Crocosphaera subtropica (strain ATCC 51142 / BH68) (Cyanothece sp. (strain ATCC 51142)).